Consider the following 120-residue polypeptide: Aspartate 1-decarboxylase (120 aa).

Catalysis depends on S25, which acts as the Schiff-base intermediate with substrate; via pyruvic acid. Pyruvic acid (Ser) is present on S25. T57 serves as a coordination point for substrate. Y58 functions as the Proton donor in the catalytic mechanism. G73 to A75 is a binding site for substrate.

It belongs to the PanD family. As to quaternary structure, heterooctamer of four alpha and four beta subunits. The cofactor is pyruvate. Is synthesized initially as an inactive proenzyme, which is activated by self-cleavage at a specific serine bond to produce a beta-subunit with a hydroxyl group at its C-terminus and an alpha-subunit with a pyruvoyl group at its N-terminus.

The protein resides in the cytoplasm. It catalyses the reaction L-aspartate + H(+) = beta-alanine + CO2. Its pathway is cofactor biosynthesis; (R)-pantothenate biosynthesis; beta-alanine from L-aspartate: step 1/1. Functionally, catalyzes the pyruvoyl-dependent decarboxylation of aspartate to produce beta-alanine. This Thermus thermophilus (strain ATCC 27634 / DSM 579 / HB8) protein is Aspartate 1-decarboxylase.